The following is a 749-amino-acid chain: Catalase-peroxidase (749 aa).

A cross-link (tryptophyl-tyrosyl-methioninium (Trp-Tyr) (with M-260)) is located at residues Trp98 to Tyr234. The active-site Proton acceptor is the His99. The tryptophyl-tyrosyl-methioninium (Tyr-Met) (with W-98) cross-link spans Tyr234 to Met260. His275 contributes to the heme b binding site.

Belongs to the peroxidase family. Peroxidase/catalase subfamily. As to quaternary structure, homodimer or homotetramer. The cofactor is heme b. Post-translationally, formation of the three residue Trp-Tyr-Met cross-link is important for the catalase, but not the peroxidase activity of the enzyme.

It is found in the cytoplasm. It catalyses the reaction H2O2 + AH2 = A + 2 H2O. The catalysed reaction is 2 H2O2 = O2 + 2 H2O. In terms of biological role, bifunctional enzyme with both catalase and broad-spectrum peroxidase activity. In Mycosarcoma maydis (Corn smut fungus), this protein is Catalase-peroxidase.